Reading from the N-terminus, the 353-residue chain is Probable peptidoglycan glycosyltransferase FtsW (353 aa).

Helical transmembrane passes span 26–46 (IFYF…PMSF), 53–73 (LILI…KSVH), 115–135 (FWGF…LLAE), 137–157 (DLGT…LSGV), 162–182 (FFII…FEPY), 242–262 (IIGE…IFFI), 288–308 (IGLW…GILP), and 314–334 (LPLI…ICIL).

This sequence belongs to the SEDS family. FtsW subfamily.

Its subcellular location is the cell inner membrane. The enzyme catalyses [GlcNAc-(1-&gt;4)-Mur2Ac(oyl-L-Ala-gamma-D-Glu-L-Lys-D-Ala-D-Ala)](n)-di-trans,octa-cis-undecaprenyl diphosphate + beta-D-GlcNAc-(1-&gt;4)-Mur2Ac(oyl-L-Ala-gamma-D-Glu-L-Lys-D-Ala-D-Ala)-di-trans,octa-cis-undecaprenyl diphosphate = [GlcNAc-(1-&gt;4)-Mur2Ac(oyl-L-Ala-gamma-D-Glu-L-Lys-D-Ala-D-Ala)](n+1)-di-trans,octa-cis-undecaprenyl diphosphate + di-trans,octa-cis-undecaprenyl diphosphate + H(+). Its pathway is cell wall biogenesis; peptidoglycan biosynthesis. Functionally, peptidoglycan polymerase that is essential for cell division. This chain is Probable peptidoglycan glycosyltransferase FtsW, found in Buchnera aphidicola subsp. Schizaphis graminum (strain Sg).